Here is a 785-residue protein sequence, read N- to C-terminus: ATP-dependent 6-phosphofructokinase 1 (785 aa).

Residues 1–389 (MATTHAPAEP…YHFAYKNTAT (389 aa)) are N-terminal catalytic PFK domain 1. Residues Gly-23, 86-87 (RS), and 116-119 (GDGS) each bind ATP. Asp-117 is a binding site for Mg(2+). Residues 162-164 (SID), Arg-199, 206-208 (MGR), Glu-263, Arg-291, and 297-300 (HTQR) each bind substrate. Asp-164 acts as the Proton acceptor in catalysis. The tract at residues 390-403 (PDHPKLILPENKRM) is interdomain linker. Residues 404–785 (RIAIIHVGAP…KTGWSCYENC (382 aa)) are C-terminal regulatory PFK domain 2. Residues Arg-480, 537–541 (TISNN), Arg-575, 582–584 (QGG), Glu-642, Arg-668, 674–677 (HFQQ), and Arg-749 contribute to the beta-D-fructose 2,6-bisphosphate site.

It belongs to the phosphofructokinase type A (PFKA) family. ATP-dependent PFK group I subfamily. Eukaryotic two domain clade 'E' sub-subfamily. Homotetramer. Mg(2+) is required as a cofactor.

The protein resides in the cytoplasm. It carries out the reaction beta-D-fructose 6-phosphate + ATP = beta-D-fructose 1,6-bisphosphate + ADP + H(+). The protein operates within carbohydrate degradation; glycolysis; D-glyceraldehyde 3-phosphate and glycerone phosphate from D-glucose: step 3/4. Its activity is regulated as follows. Allosterically activated by ADP, AMP, or fructose 2,6-bisphosphate, and allosterically inhibited by ATP or citrate. Functionally, catalyzes the phosphorylation of D-fructose 6-phosphate to fructose 1,6-bisphosphate by ATP, the first committing step of glycolysis. The sequence is that of ATP-dependent 6-phosphofructokinase 1 (pfkA) from Aspergillus oryzae (strain ATCC 42149 / RIB 40) (Yellow koji mold).